Here is an 830-residue protein sequence, read N- to C-terminus: Probable glucan 1,3-beta-glucosidase D (830 aa).

2 stretches are compositionally biased toward basic and acidic residues: residues 1–11 and 74–84; these read MPGHSRSRDRL and VHEHDHDHEYD. Disordered regions lie at residues 1-91, 127-163, and 260-297; these read MPGH…EEPW, MSGA…QRRK, and GGPG…STSA. The Cytoplasmic portion of the chain corresponds to 1-307; it reads MPGHSRSRDR…RPSFWKRYHK (307 aa). Over residues 147-163 the composition is skewed to basic residues; it reads GKGKKRLDRETRRQRRK. Residues 308–328 form a helical; Signal-anchor for type II membrane protein membrane-spanning segment; that stretch reads TFIFFAILIVLAAIAIPVGII. Over 329–830 the chain is Extracellular; that stretch reads EARRLHGTSG…PSFGNLPEYY (502 aa). Residues N341, N376, N381, N393, N397, N546, and N558 are each glycosylated (N-linked (GlcNAc...) asparagine). E597 functions as the Proton donor in the catalytic mechanism. 3 N-linked (GlcNAc...) asparagine glycosylation sites follow: N610, N669, and N689. E702 functions as the Nucleophile in the catalytic mechanism.

Belongs to the glycosyl hydrolase 5 (cellulase A) family.

It localises to the cell membrane. The catalysed reaction is Successive hydrolysis of beta-D-glucose units from the non-reducing ends of (1-&gt;3)-beta-D-glucans, releasing alpha-glucose.. Functionally, glucosidase involved in the degradation of cellulosic biomass. Active on lichenan. The sequence is that of Probable glucan 1,3-beta-glucosidase D (exgD) from Aspergillus niger (strain ATCC MYA-4892 / CBS 513.88 / FGSC A1513).